A 715-amino-acid polypeptide reads, in one-letter code: Integrator complex subunit 13 (715 aa).

Disordered stretches follow at residues 572–612 (KPPE…SERI) and 626–659 (AEVI…SKGP). Positions 581 to 591 (KRGRKREDKEE) match the Nuclear localization signal (NLS) motif. The cleavage module binding motif (CMBM) stretch occupies residues 658 to 703 (GPMSLLSLWSSRINTANSRKHQEFVGRLNSVNNKAELYQHLKEENG).

Belongs to the Integrator subunit 13 family. In terms of assembly, component of the Integrator complex, composed of core subunits INTS1, INTS2, INTS3, INTS4, INTS5, INTS6, INTS7, INTS8, INTS9/RC74, INTS10, INTS11/CPSF3L, INTS12, INTS13, INTS14 and INTS15. The core complex associates with protein phosphatase 2A subunits PPP2CA and PPP2R1A, to form the Integrator-PP2A (INTAC) complex. INTS13 is part of the tail subcomplex, composed of INTS10, INTS13, INTS14 and INTS15.

The protein resides in the nucleus. It localises to the cytoplasm. Functionally, component of the integrator complex, a multiprotein complex that terminates RNA polymerase II (Pol II) transcription in the promoter-proximal region of genes. The integrator complex provides a quality checkpoint during transcription elongation by driving premature transcription termination of transcripts that are unfavorably configured for transcriptional elongation: the complex terminates transcription by (1) catalyzing dephosphorylation of the C-terminal domain (CTD) of Pol II subunit POLR2A/RPB1 and SUPT5H/SPT5, (2) degrading the exiting nascent RNA transcript via endonuclease activity and (3) promoting the release of Pol II from bound DNA. The integrator complex is also involved in terminating the synthesis of non-coding Pol II transcripts, such as enhancer RNAs (eRNAs), small nuclear RNAs (snRNAs), telomerase RNAs and long non-coding RNAs (lncRNAs). Within the integrator complex, INTS13 is part of the integrator tail module and acts as a platform for the recruitment of transcription factors at promoters. Plays a role in gastrulation and early embryogenesis. The sequence is that of Integrator complex subunit 13 from Xenopus laevis (African clawed frog).